The sequence spans 689 residues: Glycine--tRNA ligase beta subunit (689 aa).

This sequence belongs to the class-II aminoacyl-tRNA synthetase family. Tetramer of two alpha and two beta subunits.

The protein localises to the cytoplasm. The catalysed reaction is tRNA(Gly) + glycine + ATP = glycyl-tRNA(Gly) + AMP + diphosphate. In Shewanella putrefaciens (strain CN-32 / ATCC BAA-453), this protein is Glycine--tRNA ligase beta subunit.